The sequence spans 338 residues: Protein SGT1 homolog (338 aa).

A2 bears the N-acetylalanine mark. TPR repeat units follow at residues 11-45 (AASR…KPDD), 46-79 (APYY…NPNS), and 80-113 (STAL…NSAD). A CS domain is found at 142-231 (QSKIKYDWYQ…PEAVRWEKLE (90 aa)). Positions 249 to 338 (LYPSSSHYTR…PPDDMEWKKY (90 aa)) constitute an SGS domain. S254 is modified (phosphoserine). T257 is subject to Phosphothreonine. K268 participates in a covalent cross-link: Glycyl lysine isopeptide (Lys-Gly) (interchain with G-Cter in SUMO1); alternate. A Glycyl lysine isopeptide (Lys-Gly) (interchain with G-Cter in SUMO2); alternate cross-link involves residue K268. At S304 the chain carries Phosphoserine.

This sequence belongs to the SGT1 family. In terms of assembly, probably associates with SCF (SKP1-CUL1-F-box protein) complex through interaction with SKP1. Interacts with S100A6. Interacts with HSP90. In terms of processing, phosphorylated at Ser-254 and Ser-304, dephosphorylation promotes nuclear translocation, most likely due to disruption of the SUGT1-HSP90 complex.

The protein localises to the cytoplasm. It is found in the nucleus. May play a role in ubiquitination and subsequent proteasomal degradation of target proteins. This is Protein SGT1 homolog from Bos taurus (Bovine).